The following is a 286-amino-acid chain: 4-hydroxybenzoate octaprenyltransferase (286 aa).

8 consecutive transmembrane segments (helical) span residues 20 to 40, 43 to 63, 96 to 116, 142 to 162, 167 to 187, 210 to 230, 235 to 255, and 266 to 286; these read IGTLLLLWPCLMALVLAAQGL, IKVLLIFIVGVVIMRANGCII, LFTLLGLAAFCLVLWLNPLVV, FLGIVWSWSIPMAYAAQLGEV, WWLFMANWCWTVAYDTMYAIV, QIIGVFQLAALGCFVMAGLVA, IYGLGIISFIGFAVYQQRLIF, and FLNNNWAGMVLFIALALDYMI.

Belongs to the UbiA prenyltransferase family. Mg(2+) serves as cofactor.

The protein localises to the cell inner membrane. It catalyses the reaction all-trans-octaprenyl diphosphate + 4-hydroxybenzoate = 4-hydroxy-3-(all-trans-octaprenyl)benzoate + diphosphate. Its pathway is cofactor biosynthesis; ubiquinone biosynthesis. Catalyzes the prenylation of para-hydroxybenzoate (PHB) with an all-trans polyprenyl group. Mediates the second step in the final reaction sequence of ubiquinone-8 (UQ-8) biosynthesis, which is the condensation of the polyisoprenoid side chain with PHB, generating the first membrane-bound Q intermediate 3-octaprenyl-4-hydroxybenzoate. The chain is 4-hydroxybenzoate octaprenyltransferase from Shewanella frigidimarina (strain NCIMB 400).